The chain runs to 201 residues: Adenylyl-sulfate kinase (201 aa).

35–42 (GLSGSGKS) is a binding site for ATP. S109 functions as the Phosphoserine intermediate in the catalytic mechanism.

It belongs to the APS kinase family.

The enzyme catalyses adenosine 5'-phosphosulfate + ATP = 3'-phosphoadenylyl sulfate + ADP + H(+). The protein operates within sulfur metabolism; hydrogen sulfide biosynthesis; sulfite from sulfate: step 2/3. Catalyzes the synthesis of activated sulfate. The sequence is that of Adenylyl-sulfate kinase from Escherichia coli (strain ATCC 8739 / DSM 1576 / NBRC 3972 / NCIMB 8545 / WDCM 00012 / Crooks).